A 365-amino-acid polypeptide reads, in one-letter code: Phosphatidylcholine:ceramide cholinephosphotransferase 4 (365 aa).

At 1–44 the chain is on the cytoplasmic side; it reads MISYPFFSLSPPGLVPPPMAVPPVEMYSGSFWNRMRKPLPLRTQ. The chain crosses the membrane as a helical span at residues 45-65; sequence VIRFTVVFVIVSFILAVALQI. Residues 66 to 92 lie on the Lumenal side of the membrane; that stretch reads THERMPDPKVTKPLPDLGFELLTKVPG. Residues 93–113 traverse the membrane as a helical segment; that stretch reads MYVLADCCIGFLNILSVFTAF. Residues 114 to 165 are Cytoplasmic-facing; the sequence is KLYLLHRHCVGSGEPELPCNIPGVSRFFLSVWLCKENCRIELRNVHTIAWIR. The helical transmembrane segment at 166 to 186 threads the bilayer; that stretch reads FITSYALLLLFRSVVIVMTSL. Residues 187-229 are Lumenal-facing; sequence PAPDDLCQDPPKIENPVKNVILTVLTAGGGSIHCGDLMYSGHT. Histidine 228 is a catalytic residue. A helical transmembrane segment spans residues 230-250; sequence VILTLHLMFHWIYGAMVHWSF. A topological domain (cytoplasmic) is located at residue arginine 251. Residues 252 to 272 form a helical membrane-spanning segment; the sequence is PVVTVVAIFGYYCIVASRFHY. Residues histidine 271 and aspartate 275 contribute to the active site. At 273-275 the chain is on the lumenal side; that stretch reads TDD. The chain crosses the membrane as a helical span at residues 276 to 296; that stretch reads VLVAIYLTIATFIAVGHNADG. Residues 297-365 lie on the Cytoplasmic side of the membrane; it reads APWQLQLFIR…ALMFKCGAYV (69 aa).

This sequence belongs to the sphingomyelin synthase family.

The protein localises to the golgi apparatus membrane. It catalyses the reaction an N-acylsphing-4-enine + a 1,2-diacyl-sn-glycero-3-phosphocholine = a sphingomyelin + a 1,2-diacyl-sn-glycerol. In terms of biological role, bidirectional lipid cholinephosphotransferase capable of converting phosphatidylcholine (PC) and ceramide to sphingomyelin (SM) and diacylglycerol (DAG) and vice versa. Direction is dependent on the relative concentrations of DAG and ceramide as phosphocholine acceptors. Directly and specifically recognizes the choline head group on the substrate. Also requires two fatty chains on the choline-P donor molecule in order to be recognized efficiently as a substrate. Does not function strictly as a SM synthase. Essential for viability of the pathogenic bloodstream stage of this human protozoan parasite and, consequently, can be considered as potential drug target. In Trypanosoma brucei brucei (strain 927/4 GUTat10.1), this protein is Phosphatidylcholine:ceramide cholinephosphotransferase 4.